Here is a 581-residue protein sequence, read N- to C-terminus: Pentatricopeptide repeat-containing protein At1g34160 (581 aa).

PPR repeat units follow at residues 67 to 101, 108 to 142, 143 to 173, 174 to 208, 209 to 239, 240 to 270, 272 to 306, 307 to 341, and 342 to 372; these read LTND…SSSS, DALT…GLSA, DSLL…MPVR, DVAS…GIRR, SEVT…YSND, NVIV…FTGK, SVVT…GIKP, DDVS…GVER, and NMKH…MSMI. Residues 377–452 are type E motif; the sequence is LWQSLLGASE…IPGLSYIEAK (76 aa). The interval 453–483 is type E(+) motif; sequence GTIHEFYNSDKSHEQWREIYEKIDEIRFKIR. The tract at residues 484–581 is type DYW motif; it reads EDGYVAQTGL…DGSCSCRDFW (98 aa).

The protein belongs to the PPR family. PCMP-H subfamily.

This chain is Pentatricopeptide repeat-containing protein At1g34160 (PCMP-H68), found in Arabidopsis thaliana (Mouse-ear cress).